Reading from the N-terminus, the 99-residue chain is MSGRKETVLDLAKFVDKGVQVKLTGGRQVTGTLKGYDQLLNLVLDEAVEFVRDHDDPLKTTDQTRRLGLIVCRGTAVMLVSPTDGTEEIANPFVTAEAV.

Positions 6–86 constitute a Sm domain; the sequence is ETVLDLAKFV…VMLVSPTDGT (81 aa).

Belongs to the snRNP Sm proteins family. In terms of assembly, component of the heptameric LSM1-LSM7 complex that forms a seven-membered ring structure with a donut shape. The LSM subunits are arranged in the order LSM1, LSM2, LSM3, LSM6, LSM5, LSM7 and LSM4. Component of the heptameric LSM2-LSM8 complex that forms a seven-membered ring structure with a donut shape. The LSM subunits are arranged in the order LSM8, LSM2, LSM3, LSM6, LSM5, LSM7 and LSM4. LSM7 subunit interacts only with its two neighboring subunits, LSM5 and LSM4. Expressed in roots, leaves, stems, flowers and siliques.

It localises to the cytoplasm. It is found in the nucleus. Component of LSM protein complexes, which are involved in RNA processing. Component of the cytoplasmic LSM1-LSM7 complex which is involved in mRNA degradation by promoting decapping and leading to accurate 5'-3' mRNA decay. The cytoplasmic LSM1-LSM7 complex regulates developmental gene expression by the decapping of specific development-related transcripts. Component of the nuclear LSM2-LSM8 complex which is involved splicing nuclear mRNAs. LSM2-LSM8 binds directly to the U6 small nuclear RNAs (snRNAs) and is essential for accurate splicing of selected development-related mRNAs through the stabilization of the spliceosomal U6 snRNA. Plays a critical role in the regulation of development-related gene expression. This Arabidopsis thaliana (Mouse-ear cress) protein is Sm-like protein LSM7.